The sequence spans 152 residues: MTITDLVLILFIAALLAYALYDQFIMPRRNGPTLLSIALLRRGRVDSVIFVGLVAILIYNNVTSHGAQMTTWLLSALALMGFYIFWIRTPRIIFKQRGFFFANVWIEYNRIKEMNLSEDGVLVMQLEQRRLLIRVRNIDNLEKIYKLIIENQ.

The next 3 membrane-spanning stretches (helical) occupy residues L6–M26, V45–H65, and A67–I87.

It belongs to the UPF0266 family.

Its subcellular location is the cell inner membrane. The protein is UPF0266 membrane protein YobD of Salmonella dublin (strain CT_02021853).